We begin with the raw amino-acid sequence, 696 residues long: Tensin-4 (696 aa).

The N-terminal stretch at 1 to 14 (MSSSLLAGGHMVSL) is a signal peptide. Disordered regions lie at residues 157 to 246 (LDGP…RAPQ), 271 to 344 (SLPH…CPAS), and 356 to 416 (LING…KDMQ). Residues 192–203 (SSSNESLIFSGN) are compositionally biased toward polar residues. S230 is modified (phosphoserine). Residues 271–304 (SLPHSSLSSYPSSSRSLGSPASSSSSLHSLDRGS) show a composition bias toward low complexity. Composition is skewed to polar residues over residues 326-344 (QAVQ…CPAS) and 372-397 (PGHQ…SPSK). One can recognise an SH2 domain in the interval 429 to 536 (WFKPSITREQ…ALPCKLTIPQ (108 aa)). Residues 563-690 (CHTLYLSSVS…QVISLVTALL (128 aa)) enclose the PTB domain.

This sequence belongs to the PTEN phosphatase protein family. As to quaternary structure, interacts (via SH2 domain) with Rho GTPase-activating protein DLC1 (via C-terminus); the interaction is independent of DLC1 tyrosine phosphorylation. Interacts with integrin ITGB1; the interaction displaces tensin TNS3 from the ITGB1 cytoplasmic tail and promotes ITGB1 stability. Interacts (via SH2 domain) with E3 ubiquitin-protein ligase CBL (phosphorylated on 'Tyr-780'); the interaction is enhanced in the presence of EGF and reduces interaction of CBL with EGFR. Interacts (via SH2 domain) with receptor tyrosine kinase MET (when phosphorylated); the interaction increases MET protein stability.

Its subcellular location is the cell junction. It is found in the focal adhesion. The protein localises to the cytoplasm. It localises to the cytoskeleton. Promotes EGF-induced cell migration by displacing tensin TNS3 from the cytoplasmic tail of integrin ITGB1 which results in dissociation of TNS3 from focal adhesions, disassembly of actin stress fibers and initiation of cell migration. Suppresses ligand-induced degradation of EGFR by reducing EGFR ubiquitination in the presence of EGF. Increases MET protein stability by inhibiting MET endocytosis and subsequent lysosomal degradation which leads to increased cell survival, proliferation and migration. The protein is Tensin-4 (Tns4) of Mus musculus (Mouse).